The sequence spans 138 residues: Basic phospholipase A2 BP-III (138 aa).

The signal sequence occupies residues 1-16 (MRTLWIMAVLLVGVDG). Disulfide bonds link C42–C132, C44–C60, C59–C112, C65–C138, C66–C105, C73–C98, and C91–C103. Ca(2+) is bound by residues G45 and G47. The active site involves H63. D106 is a catalytic residue.

This sequence belongs to the phospholipase A2 family. Group II subfamily. K49 sub-subfamily. It depends on Ca(2+) as a cofactor. Expressed by the venom gland.

It localises to the secreted. It carries out the reaction a 1,2-diacyl-sn-glycero-3-phosphocholine + H2O = a 1-acyl-sn-glycero-3-phosphocholine + a fatty acid + H(+). Functionally, snake venom phospholipase A2 (PLA2) that has low phospholipase A2 activity. Shows anticoagulant activities, strong myolytic activity, infiltration of polymorphonuclear cells, and edema in stromal tissues. Induces cell death of Jurkat cells in a concentration dependent manner. PLA2 catalyzes the calcium-dependent hydrolysis of the 2-acyl groups in 3-sn-phosphoglycerides. The protein is Basic phospholipase A2 BP-III of Protobothrops flavoviridis (Habu).